The sequence spans 545 residues: Chaperonin GroEL (545 aa).

Residues 29-32 (TLGP), 86-90 (DGTTT), Gly413, 476-478 (NAA), and Asp492 each bind ATP.

The protein belongs to the chaperonin (HSP60) family. In terms of assembly, forms a cylinder of 14 subunits composed of two heptameric rings stacked back-to-back. Interacts with the co-chaperonin GroES.

It is found in the cytoplasm. The catalysed reaction is ATP + H2O + a folded polypeptide = ADP + phosphate + an unfolded polypeptide.. Functionally, together with its co-chaperonin GroES, plays an essential role in assisting protein folding. The GroEL-GroES system forms a nano-cage that allows encapsulation of the non-native substrate proteins and provides a physical environment optimized to promote and accelerate protein folding. The sequence is that of Chaperonin GroEL from Shouchella clausii (strain KSM-K16) (Alkalihalobacillus clausii).